Reading from the N-terminus, the 201-residue chain is Large ribosomal subunit protein uL4 (201 aa).

The tract at residues 39–70 is disordered; it reads GRQGTKAQKTRSEVSGGGKKPWRQKGTGRARA.

The protein belongs to the universal ribosomal protein uL4 family. Part of the 50S ribosomal subunit.

In terms of biological role, one of the primary rRNA binding proteins, this protein initially binds near the 5'-end of the 23S rRNA. It is important during the early stages of 50S assembly. It makes multiple contacts with different domains of the 23S rRNA in the assembled 50S subunit and ribosome. Forms part of the polypeptide exit tunnel. The protein is Large ribosomal subunit protein uL4 of Marinobacter nauticus (strain ATCC 700491 / DSM 11845 / VT8) (Marinobacter aquaeolei).